The chain runs to 162 residues: MANVFFDVQFGGDAPKKIVFKLYDDVVPKTAANFRELATGSRGFGYKGSVFHRVITDFMAQGGDFTNFNGTGGKSIYGEKFADENFKLKHTKPALLSMANAGPNTNGSQFFITFVPCPWLDGKHVVFGEVVDGFDTLELFKKNSSQQGKPKTTIKIVDSGVV.

Positions 5–161 constitute a PPIase cyclophilin-type domain; it reads FFDVQFGGDA…TTIKIVDSGV (157 aa).

The protein belongs to the cyclophilin-type PPIase family. PPIase A subfamily.

The catalysed reaction is [protein]-peptidylproline (omega=180) = [protein]-peptidylproline (omega=0). With respect to regulation, binds cyclosporin A (CsA). CsA mediates some of its effects via an inhibitory action on PPIase. Its function is as follows. PPIases accelerate the folding of proteins. It catalyzes the cis-trans isomerization of proline imidic peptide bonds in oligopeptides. The sequence is that of Peptidyl-prolyl cis-trans isomerase from Paramecium primaurelia.